A 238-amino-acid polypeptide reads, in one-letter code: ATP synthase subunit a (238 aa).

5 helical membrane-spanning segments follow: residues 18-38 (GTTMITTTIAMAIVVIITVIG), 76-96 (FIVLAYALLFYVFVANMMGIP), 117-137 (VLTLTMAVFIVVLTHIYGIMV), 173-193 (LFGNIYAKEILMLLLVSLGTT), and 208-230 (WQAFSIFIGSLQAYIFAMLAMVY).

Belongs to the ATPase A chain family. F-type ATPases have 2 components, CF(1) - the catalytic core - and CF(0) - the membrane proton channel. CF(1) has five subunits: alpha(3), beta(3), gamma(1), delta(1), epsilon(1). CF(0) has three main subunits: a(1), b(2) and c(9-12). The alpha and beta chains form an alternating ring which encloses part of the gamma chain. CF(1) is attached to CF(0) by a central stalk formed by the gamma and epsilon chains, while a peripheral stalk is formed by the delta and b chains.

The protein resides in the cell membrane. Key component of the proton channel; it plays a direct role in the translocation of protons across the membrane. The protein is ATP synthase subunit a of Shouchella clausii (strain KSM-K16) (Alkalihalobacillus clausii).